Here is a 463-residue protein sequence, read N- to C-terminus: MTNVITRFAPSPTGFLHIGSARTALFNYLFARHNNGKFLLRIEDTDKERSTKAAVDAIFSGLKWLGLDWDAEVIFQSKRNDLYKKAALRLLKEGKAYYCFTSQEEIEKQRQKALENKQHFIFNSEWRDKEPDAYPTDVKPVIRLKTPREGRITIHDTLQGEVVIENSHIDDMVLLRADGTATYMLAVVADDHDMGITHIIRGDDHLTNAARQIAIYQALGYEVPSMTHIPLIHGADGAKLSKRHGALGVDAYKNMGYLPESLCNYLLRLGWSHGNDEIISMTQAIEWFNLDSLGKSPSRLDFAKMNSLNAYYLRMLDNDTLTAKTVEILKQNYKISDKEVSYIKQAMSSLLVRSETLLDLAQLAQIYLVDSPIVYNQDAKEIIENCNKDLIKQVTEGLNKIEKFDKESVQNKFKEIAAANDLKLSDIMKPVRALITGMDASPSVFAIAEILGKENILKRLETI.

Positions 10 to 20 (PSPTGFLHIGS) match the 'HIGH' region motif. A 'KMSKS' region motif is present at residues 239–243 (KLSKR). Residue K242 participates in ATP binding.

The protein belongs to the class-I aminoacyl-tRNA synthetase family. Glutamate--tRNA ligase type 1 subfamily. As to quaternary structure, monomer.

The protein resides in the cytoplasm. The catalysed reaction is tRNA(Glu) + L-glutamate + ATP = L-glutamyl-tRNA(Glu) + AMP + diphosphate. Its function is as follows. Catalyzes the attachment of glutamate to tRNA(Glu) in a two-step reaction: glutamate is first activated by ATP to form Glu-AMP and then transferred to the acceptor end of tRNA(Glu). The polypeptide is Glutamate--tRNA ligase 2 (Rickettsia akari (strain Hartford)).